Here is an 810-residue protein sequence, read N- to C-terminus: Lon protease (810 aa).

Positions 8–201 constitute a Lon N-terminal domain; it reads LPLLPLRGIL…KLCGIVAKEL (194 aa). ATP is bound at residue 353-360; it reads GPPGVGKT. In terms of domain architecture, Lon proteolytic spans 589–770; the sequence is NDEVGTVTGM…DQVLAIALLE (182 aa). Catalysis depends on residues S676 and K719.

The protein belongs to the peptidase S16 family. Homohexamer. Organized in a ring with a central cavity.

The protein localises to the cytoplasm. It carries out the reaction Hydrolysis of proteins in presence of ATP.. Functionally, ATP-dependent serine protease that mediates the selective degradation of mutant and abnormal proteins as well as certain short-lived regulatory proteins. Required for cellular homeostasis and for survival from DNA damage and developmental changes induced by stress. Degrades polypeptides processively to yield small peptide fragments that are 5 to 10 amino acids long. Binds to DNA in a double-stranded, site-specific manner. This is Lon protease from Desulforamulus reducens (strain ATCC BAA-1160 / DSM 100696 / MI-1) (Desulfotomaculum reducens).